The following is a 423-amino-acid chain: Glutamate-1-semialdehyde 2,1-aminomutase (423 aa).

The residue at position 258 (Lys258) is an N6-(pyridoxal phosphate)lysine.

Belongs to the class-III pyridoxal-phosphate-dependent aminotransferase family. HemL subfamily. Requires pyridoxal 5'-phosphate as cofactor.

Its subcellular location is the cytoplasm. It catalyses the reaction (S)-4-amino-5-oxopentanoate = 5-aminolevulinate. It functions in the pathway porphyrin-containing compound metabolism; protoporphyrin-IX biosynthesis; 5-aminolevulinate from L-glutamyl-tRNA(Glu): step 2/2. This Pyrobaculum aerophilum (strain ATCC 51768 / DSM 7523 / JCM 9630 / CIP 104966 / NBRC 100827 / IM2) protein is Glutamate-1-semialdehyde 2,1-aminomutase.